A 339-amino-acid polypeptide reads, in one-letter code: MTDNINKESTTTTTTIDHTTNLLIDKHVEYIVKLGSKKDSFEYWVTEHIRMNGMYWGLSSLYLLKSLDKLDKNEVIQWLLSCQKSNGGFGGNTSHDDHLLSTLSAVQILIQYDALDKIDINSVVDYVVKLQREDGSFVGDQWGEVDTRFSYAAIMCLSLLKSLDKINCEKAVEYILSCQNFDGGFGSIPGAESHAGQIFTCVGALSILNEINKIDIDKLGWWLSERQLPNGGLNGRPEKSSDVCYSWWVLSALSAIDRLHWIDNDKLKSYILKCQDNETGGIADKPGDIPDVFHTFFGICGLSLMGYFKDQIESIDPVYALGTKTLQKLGLNLPWNKNL.

6 PFTB repeats span residues 24–65 (IDKH…YLLK), 72–113 (KNEV…IQYD), 120–161 (INSV…SLLK), 168–209 (CEKA…SILN), 216–257 (IDKL…SAID), and 264–306 (NDKL…SLMG). Geranylgeranyl diphosphate contacts are provided by residues 194 to 196 (HAG) and 236 to 248 (RPEK…YSWW). Asp242, Cys244, and His294 together coordinate Zn(2+).

Belongs to the protein prenyltransferase subunit beta family. In terms of assembly, heterodimer of an alpha and a beta subunit. The cofactor is Zn(2+).

It carries out the reaction geranylgeranyl diphosphate + L-cysteinyl-[protein] = S-geranylgeranyl-L-cysteinyl-[protein] + diphosphate. Functionally, catalyzes the transfer of a geranyl-geranyl moiety from geranyl-geranyl pyrophosphate to both cysteines in Rab proteins with an -XXCC, -XCXC and -CCXX C-terminal. This is Probable geranylgeranyl transferase type-2 subunit beta (rabggtb) from Dictyostelium discoideum (Social amoeba).